The primary structure comprises 78 residues: Metallothionein-like protein type 2 (78 aa).

This sequence belongs to the metallothionein superfamily. Type 15 family.

Metallothioneins have a high content of cysteine residues that bind various heavy metals. This Actinidia deliciosa (Kiwi) protein is Metallothionein-like protein type 2.